The chain runs to 158 residues: NADPH-dependent 7-cyano-7-deazaguanine reductase (158 aa).

Cys-56 (thioimide intermediate) is an active-site residue. Asp-63 acts as the Proton donor in catalysis. Substrate contacts are provided by residues 78 to 80 (LES) and 97 to 98 (HE).

It belongs to the GTP cyclohydrolase I family. QueF type 1 subfamily.

Its subcellular location is the cytoplasm. It carries out the reaction 7-aminomethyl-7-carbaguanine + 2 NADP(+) = 7-cyano-7-deazaguanine + 2 NADPH + 3 H(+). It functions in the pathway tRNA modification; tRNA-queuosine biosynthesis. Its function is as follows. Catalyzes the NADPH-dependent reduction of 7-cyano-7-deazaguanine (preQ0) to 7-aminomethyl-7-deazaguanine (preQ1). The chain is NADPH-dependent 7-cyano-7-deazaguanine reductase from Rhodopseudomonas palustris (strain TIE-1).